Here is a 335-residue protein sequence, read N- to C-terminus: Mycobacterial beta-ketoacyl-[acyl-carrier-protein] synthase III (335 aa).

Residues Cys-122 and His-258 contribute to the active site. Residues 259-263 are ACP-binding; that stretch reads QANSR. Asn-289 is an active-site residue.

The protein belongs to the thiolase-like superfamily. FabH family. As to quaternary structure, homodimer.

The protein resides in the cytoplasm. It carries out the reaction malonyl-[ACP] + dodecanoyl-CoA + H(+) = 3-oxotetradecanoyl-[ACP] + CO2 + CoA. It functions in the pathway lipid metabolism; fatty acid biosynthesis. It participates in lipid metabolism; mycolic acid biosynthesis. Catalyzes the condensation reaction of fatty acid synthesis by the addition to an acyl acceptor of two carbons from malonyl-ACP. Catalyzes the first condensation reaction which initiates fatty acid synthesis and may therefore play a role in governing the total rate of fatty acid production. Possesses both acetoacetyl-ACP synthase and acetyl transacylase activities. Its substrate specificity determines the biosynthesis of branched-chain and/or straight-chain of fatty acids. This Mycobacterium marinum (strain ATCC BAA-535 / M) protein is Mycobacterial beta-ketoacyl-[acyl-carrier-protein] synthase III.